A 371-amino-acid chain; its full sequence is 4-hydroxy-3-methylbut-2-en-1-yl diphosphate synthase (flavodoxin) (371 aa).

[4Fe-4S] cluster is bound by residues Cys270, Cys273, Cys305, and Glu312.

The protein belongs to the IspG family. The cofactor is [4Fe-4S] cluster.

It carries out the reaction (2E)-4-hydroxy-3-methylbut-2-enyl diphosphate + oxidized [flavodoxin] + H2O + 2 H(+) = 2-C-methyl-D-erythritol 2,4-cyclic diphosphate + reduced [flavodoxin]. It functions in the pathway isoprenoid biosynthesis; isopentenyl diphosphate biosynthesis via DXP pathway; isopentenyl diphosphate from 1-deoxy-D-xylulose 5-phosphate: step 5/6. Its function is as follows. Converts 2C-methyl-D-erythritol 2,4-cyclodiphosphate (ME-2,4cPP) into 1-hydroxy-2-methyl-2-(E)-butenyl 4-diphosphate. In Shewanella denitrificans (strain OS217 / ATCC BAA-1090 / DSM 15013), this protein is 4-hydroxy-3-methylbut-2-en-1-yl diphosphate synthase (flavodoxin).